The primary structure comprises 224 residues: Protein PLANT CADMIUM RESISTANCE 6 (224 aa).

A helical membrane pass occupies residues 131 to 151; that stretch reads GMLYGLICCLFAIPCVYTCTF.

The protein belongs to the cornifelin family.

The protein resides in the membrane. Functionally, may be involved in heavy metals transport. In Arabidopsis thaliana (Mouse-ear cress), this protein is Protein PLANT CADMIUM RESISTANCE 6 (PCR6).